A 378-amino-acid chain; its full sequence is Glutamate 5-kinase (378 aa).

ATP is bound at residue Lys21. Positions 61, 148, and 160 each coordinate substrate. 180–181 (TD) provides a ligand contact to ATP. The PUA domain occupies 286 to 364 (RGTLVLDAGA…RRIEELLGYM (79 aa)).

This sequence belongs to the glutamate 5-kinase family.

Its subcellular location is the cytoplasm. It carries out the reaction L-glutamate + ATP = L-glutamyl 5-phosphate + ADP. It functions in the pathway amino-acid biosynthesis; L-proline biosynthesis; L-glutamate 5-semialdehyde from L-glutamate: step 1/2. Its function is as follows. Catalyzes the transfer of a phosphate group to glutamate to form L-glutamate 5-phosphate. The polypeptide is Glutamate 5-kinase (Chromohalobacter salexigens (strain ATCC BAA-138 / DSM 3043 / CIP 106854 / NCIMB 13768 / 1H11)).